We begin with the raw amino-acid sequence, 458 residues long: Selection and upkeep of intraepithelial T-cells protein 3 (458 aa).

An N-terminal signal peptide occupies residues 1–24 (MGSIQIIFAAYCVVLCVLQMLVLS). Residues 25 to 237 (SEQFTITGLE…ESISIVLTGD (213 aa)) lie on the Extracellular side of the membrane. Residues 26 to 141 (EQFTITGLER…EEHITEVKVT (116 aa)) enclose the Ig-like V-type domain. Intrachain disulfides connect Cys-49–Cys-123 and Cys-163–Cys-217. In terms of domain architecture, Ig-like C1-type spans 142-231 (ATSSDIKIIM…LLTHQEESIS (90 aa)). The N-linked (GlcNAc...) asparagine glycan is linked to Asn-200. A helical membrane pass occupies residues 238 to 258 (LFSWKIDWILILSIIACVMIP). The Cytoplasmic portion of the chain corresponds to 259-283 (YSMTSYLQQHLIHGSCSQRSHHWRK). A helical membrane pass occupies residues 284-304 (NAMVCMSSVIAIIGSMLILHL). Topologically, residues 305–324 (KQRVPISDQHFELDTLYLED) are extracellular. Residues 325–345 (ISVILCVVIVFNLKLNLLTYY) form a helical membrane-spanning segment. Residues 346 to 359 (RLERKYDGCTPGCK) lie on the Cytoplasmic side of the membrane. A helical membrane pass occupies residues 360-380 (ACFYILKIIIIILPFVFTFGC). Over 381–414 (YNAIFLKYHQLQKKVSIPDPLYYFYTSWLVNMEM) the chain is Extracellular. The chain crosses the membrane as a helical span at residues 415 to 435 (LGVFLVFFPTFINLIEFSQFI). At 436–458 (KTVPKPIWLCQENMREDDAIRHR) the chain is on the cytoplasmic side.

It belongs to the SKINT family. Expressed in skin and thymus.

The protein localises to the membrane. Its function is as follows. May act by engaging a cell surface molecule on immature T-cells in the embryonic thymus. The chain is Selection and upkeep of intraepithelial T-cells protein 3 (Skint3) from Mus musculus (Mouse).